A 256-amino-acid chain; its full sequence is Imidazole glycerol phosphate synthase subunit HisF (256 aa).

Catalysis depends on residues D11 and D130.

This sequence belongs to the HisA/HisF family. In terms of assembly, heterodimer of HisH and HisF.

Its subcellular location is the cytoplasm. It catalyses the reaction 5-[(5-phospho-1-deoxy-D-ribulos-1-ylimino)methylamino]-1-(5-phospho-beta-D-ribosyl)imidazole-4-carboxamide + L-glutamine = D-erythro-1-(imidazol-4-yl)glycerol 3-phosphate + 5-amino-1-(5-phospho-beta-D-ribosyl)imidazole-4-carboxamide + L-glutamate + H(+). It participates in amino-acid biosynthesis; L-histidine biosynthesis; L-histidine from 5-phospho-alpha-D-ribose 1-diphosphate: step 5/9. IGPS catalyzes the conversion of PRFAR and glutamine to IGP, AICAR and glutamate. The HisF subunit catalyzes the cyclization activity that produces IGP and AICAR from PRFAR using the ammonia provided by the HisH subunit. This Methylocella silvestris (strain DSM 15510 / CIP 108128 / LMG 27833 / NCIMB 13906 / BL2) protein is Imidazole glycerol phosphate synthase subunit HisF.